A 451-amino-acid polypeptide reads, in one-letter code: Proline--tRNA ligase (451 aa).

This sequence belongs to the class-II aminoacyl-tRNA synthetase family. ProS type 2 subfamily. Homodimer.

It is found in the cytoplasm. It carries out the reaction tRNA(Pro) + L-proline + ATP = L-prolyl-tRNA(Pro) + AMP + diphosphate. Functionally, catalyzes the attachment of proline to tRNA(Pro) in a two-step reaction: proline is first activated by ATP to form Pro-AMP and then transferred to the acceptor end of tRNA(Pro). The polypeptide is Proline--tRNA ligase (Ruegeria sp. (strain TM1040) (Silicibacter sp.)).